A 130-amino-acid chain; its full sequence is T-cell receptor beta chain V region A20.2.25 (130 aa).

The first 21 residues, 1 to 21 (MSCRLLLYVSLCLVETALMNT), serve as a signal peptide directing secretion. Positions 22 to 112 (KITQSPRYLI…DSAVYFCASS (91 aa)) are v segment. Residues Asn36 and Asn75 are each glycosylated (N-linked (GlcNAc...) asparagine). The tract at residues 113-115 (HGE) is d segment. Positions 116-130 (NTEVFFGKGTTLTVV) are j segment.

The protein is T-cell receptor beta chain V region A20.2.25 of Mus musculus (Mouse).